The following is a 174-amino-acid chain: NADH-ubiquinone oxidoreductase chain 6 (174 aa).

A run of 4 helical transmembrane segments spans residues 24 to 44 (LAMG…TGLM), 48 to 68 (FWFS…LFIY), 82 to 102 (MKLT…NILL), and 143 to 163 (LMTI…VKIT).

It belongs to the complex I subunit 6 family.

The protein localises to the mitochondrion membrane. The enzyme catalyses a ubiquinone + NADH + 5 H(+)(in) = a ubiquinol + NAD(+) + 4 H(+)(out). Its function is as follows. Core subunit of the mitochondrial membrane respiratory chain NADH dehydrogenase (Complex I) that is believed to belong to the minimal assembly required for catalysis. Complex I functions in the transfer of electrons from NADH to the respiratory chain. The immediate electron acceptor for the enzyme is believed to be ubiquinone. The polypeptide is NADH-ubiquinone oxidoreductase chain 6 (ND6) (Ceratitis capitata (Mediterranean fruit fly)).